The following is a 449-amino-acid chain: Exodeoxyribonuclease 7 large subunit (449 aa).

The protein belongs to the XseA family. Heterooligomer composed of large and small subunits.

The protein localises to the cytoplasm. It catalyses the reaction Exonucleolytic cleavage in either 5'- to 3'- or 3'- to 5'-direction to yield nucleoside 5'-phosphates.. Its function is as follows. Bidirectionally degrades single-stranded DNA into large acid-insoluble oligonucleotides, which are then degraded further into small acid-soluble oligonucleotides. This chain is Exodeoxyribonuclease 7 large subunit, found in Salmonella agona (strain SL483).